A 232-amino-acid chain; its full sequence is MLPRFLWRPVLCSYRALGSPSRSLTVSYRNLSCLALLHKGAFAAPTSRSLFCAERPISTGCTSLQVKDKRVSVQSTSDGAPPQNASHKVKEAGRDFTYFIVVLIGIGVTGGLFYVVFEELFSSSSPSKIYGEALEKCRSHPEVIGAFGEPIKGYGETTRRGRRQHVSHMEFVKDGIKCMRLKFYIEGSEPRKQGTVHIEVKENPASGKYEFQYIFVEIDTYPRRTIIIEDNR.

The transit peptide at 1 to 31 (MLPRFLWRPVLCSYRALGSPSRSLTVSYRNL) directs the protein to the mitochondrion. Residues 96–116 (FTYFIVVLIGIGVTGGLFYVV) traverse the membrane as a helical segment.

This sequence belongs to the TIM21 family.

The protein localises to the mitochondrion membrane. In terms of biological role, may participate in the translocation of transit peptide-containing proteins across the mitochondrial inner membrane. This chain is Mitochondrial import inner membrane translocase subunit Tim21 (timm21), found in Xenopus laevis (African clawed frog).